A 522-amino-acid chain; its full sequence is Putative ribose/galactose/methyl galactoside import ATP-binding protein (522 aa).

ABC transporter domains are found at residues 7–244 (LEMV…VGRE) and 254–498 (PKLG…TGQA). 39–46 (GENGAGKS) is a binding site for ATP.

This sequence belongs to the ABC transporter superfamily. Carbohydrate importer 2 (CUT2) (TC 3.A.1.2) family.

It localises to the cell membrane. It catalyses the reaction D-ribose(out) + ATP + H2O = D-ribose(in) + ADP + phosphate + H(+). It carries out the reaction D-galactose(out) + ATP + H2O = D-galactose(in) + ADP + phosphate + H(+). In terms of biological role, part of an ABC transporter complex involved in carbohydrate import. Could be involved in ribose, galactose and/or methyl galactoside import. Responsible for energy coupling to the transport system. This is Putative ribose/galactose/methyl galactoside import ATP-binding protein from Halalkalibacterium halodurans (strain ATCC BAA-125 / DSM 18197 / FERM 7344 / JCM 9153 / C-125) (Bacillus halodurans).